Consider the following 130-residue polypeptide: Large ribosomal subunit protein bL19 (130 aa).

The protein belongs to the bacterial ribosomal protein bL19 family.

Functionally, this protein is located at the 30S-50S ribosomal subunit interface and may play a role in the structure and function of the aminoacyl-tRNA binding site. This is Large ribosomal subunit protein bL19 from Burkholderia ambifaria (strain ATCC BAA-244 / DSM 16087 / CCUG 44356 / LMG 19182 / AMMD) (Burkholderia cepacia (strain AMMD)).